A 324-amino-acid chain; its full sequence is Mitochondrial oxaloacetate transport protein (324 aa).

3 Solcar repeats span residues 20-111 (ISKF…IRSS), 126-218 (QSVG…AKNI), and 227-312 (DGPA…TMKL). The next 6 membrane-spanning stretches (helical) occupy residues 26–46 (FVAG…IELI), 79–99 (GIKG…GLNG), 132–152 (VFSG…LFLV), 193–213 (GIDA…PIYN), 233–253 (LTAS…WDVI), and 284–305 (LYKG…CLTF).

Belongs to the mitochondrial carrier (TC 2.A.29) family.

The protein localises to the mitochondrion inner membrane. It carries out the reaction a dicarboxylate(in) + sulfate(out) = a dicarboxylate(out) + sulfate(in). It catalyses the reaction (2S)-2-isopropylmalate(in) + sulfate(out) = (2S)-2-isopropylmalate(out) + sulfate(in). The enzyme catalyses (2R,3S)-3-isopropylmalate(in) + sulfate(out) = (2R,3S)-3-isopropylmalate(out) + sulfate(in). The catalysed reaction is malonate(in) + sulfate(out) = malonate(out) + sulfate(in). It carries out the reaction oxaloacetate(in) + sulfate(out) = oxaloacetate(out) + sulfate(in). It catalyses the reaction thiosulfate(in) + sulfate(out) = thiosulfate(out) + sulfate(in). Its activity is regulated as follows. Inhibited by alpha-keto isocaproate, an intermediate of leucine biosynthesis pathway. In terms of biological role, antiporter that exchanges dicarboxylates and sulfur oxoanions across the inner membrane of mitochondria. Exports alpha-isopropylmalate from mitochondrial matrix to the cytosol, where it serves as a precursor for leucine biosynthesis. The protein is Mitochondrial oxaloacetate transport protein (OAC1) of Saccharomyces cerevisiae (strain ATCC 204508 / S288c) (Baker's yeast).